The sequence spans 255 residues: CCAAT/enhancer-binding protein delta (255 aa).

Disordered regions lie at residues 1-42, 91-121, and 138-206; these read MTCA…AAPA, GGPA…PGSL, and PAAQ…QEMQ. Residue Lys107 forms a Glycyl lysine isopeptide (Lys-Gly) (interchain with G-Cter in SUMO) linkage. The span at 141 to 161 shows a compositional bias: pro residues; it reads QPTPPASPDPPRRSPAPPAPG. A compositionally biased stretch (basic and acidic residues) spans 163–187; it reads ARDKAAGKRGPDRGSPEYRQRRERN. The 64-residue stretch at 177-240 folds into the bZIP domain; that stretch reads SPEYRQRRER…AGLRRFFKQL (64 aa). A basic motif region spans residues 181–208; sequence RQRRERNNIAVRKSRDKAKRRNQEMQQK. The tract at residues 212–240 is leucine-zipper; it reads LSAENEKLQQRVEQLTRDLAGLRRFFKQL.

This sequence belongs to the bZIP family. C/EBP subfamily. Binds DNA as a homodimer and as a heterodimer. Can form stable heterodimers with CEBPA, CEBPB and CEBPE. Directly interacts with SPI1/PU.1; this interaction does not affect DNA-binding properties of each partner. Interacts with PRDM16.

The protein localises to the nucleus. Its function is as follows. Transcription activator that recognizes two different DNA motifs: the CCAAT homology common to many promoters and the enhanced core homology common to many enhancers. Important transcription factor regulating the expression of genes involved in immune and inflammatory responses. Transcriptional activator that enhances IL6 transcription alone and as heterodimer with CEBPB. The chain is CCAAT/enhancer-binding protein delta (CEBPD) from Ovis aries (Sheep).